The following is a 1001-amino-acid chain: MEAAHAKTTEECLAYFGVSETTGLTPDQVKRNLEKYGLNELPAEEGKTLWELVIEQFEDLLVRILLLAACISFVLAWFEEGEETITAFVEPFVILLILIANAIVGVWQERNAENAIEALKEYEPEMGKVYRADRKSVQRIKARDIVPGDIVEVAVGDKVPADIRILAIKSTTLRVDQSILTGESVSVIKHTEPVPDPRAVNQDKKNMLFSGTNIAAGKALGIVATTGVGTEIGKIRDQMAATEQDKTPLQQKLDEFGEQLSKVISLICVAVWLINIGHFNDPVHGGSWFRGAIYYFKIAVALAVAAIPEGLPAVITTCLALGTRRMAKKNAIVRSLPSVETLGCTSVICSDKTGTLTTNQMSVCKMFIIDKVDGDICLLNEFSITGSTYAPEGEVLKNDKPVRPGQYDGLVELATICALCNDSSLDFNEAKGVYEKVGEATETALTTLVEKMNVFNTDVRSLSKVERANACNSVIRQLMKKEFTLEFSRDRKSMSVYCSPAKSSRAAVGNKMFVKGAPEGVIDRCNYVRVGTTRVPLTGPVKEKIMAVIKEWGTGRDTLRCLALATRDTPPKREEMVLDDSARFLEYETDLTFVGVVGMLDPPRKEVTGSIQLCRDAGIRVIMITGDNKGTAIAICRRIGIFGENEEVADRAYTGREFDDLPLAEQREACRRACCFARVEPSHKSKIVEYLQSYDEITAMTGDGVNDAPALKKAEIGIAMGSGTAVAKTASEMVLADDNFSTIVAAVEEGRAIYNNMKQFIRYLISSNVGEVVCIFLTAALGLPEALIPVQLLWVNLVTDGLPATALGFNPPDLDIMDRPPRSPKEPLISGWLFFRYMAIGGYVGAATVGAAAWWFLYAEDGPHVNYSQLTHFMQCTEDNTHFEGIDCEVFEAPEPMTMALSVLVTIEMCNALNSLSENQSLLRMPPWVNIWLLGSICLSMSLHFLILYVDPLPMIFKLRALDLTQWLMVLKISLPVIGLDEILKFVARNYLEDPEDERRK.

4 helical membrane passes run 49–69 (LWEL…LLAA), 90–110 (EPFV…WQER), 254–273 (DEFG…AVWL), and 296–313 (FKIA…GLPA). Residues valine 304, alanine 305, isoleucine 307, and glutamate 309 each contribute to the Ca(2+) site. The active-site 4-aspartylphosphate intermediate is aspartate 351. Mg(2+) is bound by residues aspartate 351 and threonine 353. Threonine 353 serves as a coordination point for ATP. Threonine 441 is subject to Phosphothreonine. ATP contacts are provided by glutamate 442, arginine 489, lysine 515, and arginine 560. Threonine 569 carries the phosphothreonine modification. Serine 581 is subject to Phosphoserine. The ATP site is built by threonine 625, glycine 626, aspartate 627, arginine 678, and lysine 684. Aspartate 703 is a Mg(2+) binding site. Residue asparagine 706 participates in ATP binding. 3 helical membrane-spanning segments follow: residues 758 to 777 (KQFI…CIFL), 788 to 808 (IPVQ…TALG), and 829 to 851 (ISGW…TVGA). Residues asparagine 768, glutamate 771, asparagine 796, threonine 799, and aspartate 800 each contribute to the Ca(2+) site. Positions 788-808 (IPVQLLWVNLVTDGLPATALG) are interaction with PLN. A disulfide bridge links cysteine 876 with cysteine 888. Transmembrane regions (helical) follow at residues 898–917 (TMAL…NSLS), 931–949 (IWLL…LILY), and 965–985 (TQWL…EILK). Glutamate 908 is a binding site for Ca(2+). The tract at residues 932–943 (WLLGSICLSMSL) is interaction with PLN.

Belongs to the cation transport ATPase (P-type) (TC 3.A.3) family. Type IIA subfamily. In terms of assembly, interacts with sarcolipin (SLN). Interacts with phospholamban (PLN). Interacts with myoregulin (MRLN). Interacts with DWORF. Interacts with VMP1. Mg(2+) is required as a cofactor. As to expression, skeletal muscle, fast twitch muscle (type II) fibers.

Its subcellular location is the endoplasmic reticulum membrane. It localises to the sarcoplasmic reticulum membrane. It carries out the reaction Ca(2+)(in) + ATP + H2O = Ca(2+)(out) + ADP + phosphate + H(+). Inhibited by sarcolipin (SLN) and myoregulin (MRLN). Has also been shown to be reversibly inhibited by phospholamban (PLN) at low calcium concentrations in vitro. Dephosphorylated PLN decreases the apparent affinity of the ATPase for calcium and this inhibition is regulated by the phosphorylation of PLN in vitro. Enhanced by DWORF; DWORF increases activity by displacing sarcolipin (SLN), phospholamban (PLN) and myoregulin (MRLN). In terms of biological role, key regulator of striated muscle performance by acting as the major Ca(2+) ATPase responsible for the reuptake of cytosolic Ca(2+) into the sarcoplasmic reticulum. Catalyzes the hydrolysis of ATP coupled with the translocation of calcium from the cytosol to the sarcoplasmic reticulum lumen. Contributes to calcium sequestration involved in muscular excitation/contraction. The sequence is that of Sarcoplasmic/endoplasmic reticulum calcium ATPase 1 from Homo sapiens (Human).